A 1956-amino-acid polypeptide reads, in one-letter code: MHLMCTGLRNEKLINDRKILYGECNLNIKSDSFIILLFKEIMNPFFIFQIFAMIVWSLDNYIEYTISILFITSISIILELKNTIKNQKKIKNMLNYTCPINVYRYNTSYIISSSELVPGDIYEIKNNMTIPCDTIILSGSVTMSEHMLTGESVPIHKERLPFEGNAIINKNNKYDSNDEKDDYLRIYNNHASINMIKRNHLIEETLGKKDREYKSNTHDLCSMNKLCYINNTYDDVHMKNNKMDYNNNNNNKKKKKINNLNFVKGTYINSNDLLYDDKIGVNIFEDDVNNMKHKFNQRNINYYNKDTNNLEYNNKHRYIYDCLLKKVEAISQKNKIIYSNEDINKYMLYGGTYVLSLYNINKIKYNNKEENRILGLVIKTGFITTKGKIVNNILYHKKKELNLINDSYKFLIILIIYALFSVFILLYITLSNNEYTNHIIIKCLDIITDAIPPALPTTLTVGISIAISRLKKKFSISCLCPHKINIAGQINTMVFDKTGTLTENNLQFIGIITQNKKNKNMLSDFIHIKEMNTESYIHSKDDNMIHNKNSIISEYYIKDNMKNLHTSSKKKSITKERSNFLVQTIKSCLLKDHYIKEKKKEYYTNNTYCNDLHINDSTCSSYLLNSETKDAYCEYYNIDHLCDINKKNMDINSKNELMGKYSKNELMGKTIKNELMGKYSKNELMGKYSKNELMGKYSKNELMGKYSKNELMGKYSKNELMGKTIKNQVGVDTNIYHMNCDNDYNYDYPCDYNCNNCNDTYHRLEYHNINKDNSFNIPPEKNKSYNNISEHIKINYPLLFEALACCHTLSKVNNKIMGDVLEILMFNFTNCDMLINNNSFIIKEKKKNCSYDFQKIDGDKNIGANDERCHLNNNLVSYNILKRFEFQSRLQRMSVIVKSTYGNNNDDNNDDDNNNDDDNNDDNNNDDNNNDDNNDDNNNNNYYYNIFCKGSPEKIKELCLKSKIPNNYDEILNKYTKQGMRILSISYKRVKSKNINLLNVKRSFVESNLHFLGFLIFTNNMKKNAPDIIHNLQTSGCQCIMSTGDNVLTSIHVAKKCGIINSNVESIIIGDVIPVVGKNNKQKKKLVWYNHKNDTYLKGHDKTCIDNEFTSIQSQMNSDNICGDNICGDNIYGDNICGDNIYGDNINGDNINGDNIYGDNINGDNINGDNINTYDNIYGDNYNLDYCPTEYHKCTYNNSILYRNNFLYKKENKKDKNYKNISTLYEHRTNDIQFDKLCDILINKDPRNVNIVLTGKAFIFLKKKFYSFHLPYYEECKNIVHYIMKKKHKKIKNIINNHNSNLYYHYNIIDTFVKRMNKEYMCFNKLLYKIQQKLLYNLIHNLYKKKKYMNNYYDIDEVHLIGNNNNNNNKNNSKEKKLPLKNKMKHIRKNESNDNITFNTYTSNNIHLSKYKYVHHKNYYYPDSCTNLRKKKNSLFYNLKKYIYYEKKKYLQHCLLKHDNYKKVELPRIKDINYSYQMESIKTRNFIHSLSEQFAFSNLILSFYIIKNDDNNVYNKNYIYNKNYIYNKNSICNKNYICNKNYIYNKNNIYNKNNIYNKKNILTHAKSVLLSGSSKKFLKFFSNIIRRHKLKEKKNKKNIKRYKMNHVNNTSKGHIILNMCTHGFKKDYSSLKNKYRIVNNKRYMLKNDNVYDRHMYNLTDMYRGTQYGCSKKKNKNIYMNNNNNILKNKINRFLEHLLVDKCKRNICHKYTDIKNIKLSIYEYILRTCTVYARMKPKDKSDLILSLKKLPNNSYVGMCGDGANDCLALSCADIGISLCNNNESSICSSFTSNKLCLHSIVHILIEGRASLVNSFQLFKFISLYSIMQCSQVLILYSISNKLTDNQYIFIDIVTILPLSIFMCWTSASEKLSKNIPIGKLFSFPILISIYGQIIIQLFFVMISLVVLMNLSFYKYDKNKVMKEKSDDTYLYKAQKYTLIYSLLFSKFVYVYIFKYKE.

Residues 1 to 35 (MHLMCTGLRNEKLINDRKILYGECNLNIKSDSFII) are Cytoplasmic-facing. Residues 36–58 (LLFKEIMNPFFIFQIFAMIVWSL) traverse the membrane as a helical segment. Residues 59–61 (DNY) are Extracellular-facing. The helical transmembrane segment at 62–80 (IEYTISILFITSISIILEL) threads the bilayer. Topologically, residues 81 to 407 (KNTIKNQKKI…KKELNLINDS (327 aa)) are cytoplasmic. A helical transmembrane segment spans residues 408-427 (YKFLIILIIYALFSVFILLY). The Extracellular portion of the chain corresponds to 428-440 (ITLSNNEYTNHII). Residues 441–462 (IKCLDIITDAIPPALPTTLTVG) form a helical membrane-spanning segment. At 463-1818 (ISIAISRLKK…SLVNSFQLFK (1356 aa)) the chain is on the cytoplasmic side. The active-site 4-aspartylphosphate intermediate is the D496. The interval 901 to 938 (YGNNNDDNNDDDNNNDDDNNDDNNNDDNNNDDNNDDNN) is disordered. Residues 907–935 (DNNDDDNNNDDDNNDDNNNDDNNNDDNND) are compositionally biased toward acidic residues. Mg(2+) is bound by residues D1760 and D1764. The chain crosses the membrane as a helical span at residues 1819–1837 (FISLYSIMQCSQVLILYSI). The Extracellular portion of the chain corresponds to 1838–1845 (SNKLTDNQ). Residues 1846–1863 (YIFIDIVTILPLSIFMCW) traverse the membrane as a helical segment. Residues 1864–1881 (TSASEKLSKNIPIGKLFS) lie on the Cytoplasmic side of the membrane. A helical transmembrane segment spans residues 1882 to 1905 (FPILISIYGQIIIQLFFVMISLVV). Over 1906–1928 (LMNLSFYKYDKNKVMKEKSDDTY) the chain is Extracellular. A helical membrane pass occupies residues 1929–1952 (LYKAQKYTLIYSLLFSKFVYVYIF). The Cytoplasmic segment spans residues 1953–1956 (KYKE).

This sequence belongs to the cation transport ATPase (P-type) (TC 3.A.3) family. Type V subfamily.

The protein localises to the membrane. The catalysed reaction is ATP + H2O = ADP + phosphate + H(+). This chain is Probable cation-transporting ATPase 1, found in Plasmodium falciparum.